Here is a 396-residue protein sequence, read N- to C-terminus: Cytochrome c biogenesis protein Ccs1 (396 aa).

The next 3 membrane-spanning stretches (helical) occupy residues 22 to 42, 79 to 99, and 162 to 182; these read LKFS…GTII, SNFY…CSLK, and AGPL…AIHA.

This sequence belongs to the Ccs1/CcsB family. As to quaternary structure, may interact with CcsA.

The protein resides in the plastid. The protein localises to the chloroplast thylakoid membrane. Required during biogenesis of c-type cytochromes (cytochrome c6 and cytochrome f) at the step of heme attachment. This is Cytochrome c biogenesis protein Ccs1 from Cyanidium caldarium (Red alga).